The primary structure comprises 292 residues: Cyclin-dependent kinase A-2 (292 aa).

The region spanning 4 to 286 is the Protein kinase domain; it reads YEKVEKIGEG…ARAALEHEYF (283 aa). Residues 10–18 and Lys33 each bind ATP; that span reads IGEGTYGVV. Thr14 carries the phosphothreonine modification. Residue Tyr15 is modified to Phosphotyrosine. Residue Asp126 is the Proton acceptor of the active site. At Thr160 the chain carries Phosphothreonine.

It belongs to the protein kinase superfamily. CMGC Ser/Thr protein kinase family. CDC2/CDKX subfamily. As to expression, expressed in the dividing region of the root apex and in differentiated cells such as those in the sclerenchyma, pericycle and parenchyma of the central cylinder. Expressed in the intercalary meristem and the elongation zone of internodes.

The enzyme catalyses L-seryl-[protein] + ATP = O-phospho-L-seryl-[protein] + ADP + H(+). The catalysed reaction is L-threonyl-[protein] + ATP = O-phospho-L-threonyl-[protein] + ADP + H(+). It carries out the reaction [DNA-directed RNA polymerase] + ATP = phospho-[DNA-directed RNA polymerase] + ADP + H(+). The polypeptide is Cyclin-dependent kinase A-2 (CDKA-2) (Oryza sativa subsp. japonica (Rice)).